The chain runs to 96 residues: uncharacterized protein (96 aa).

A run of 2 helical transmembrane segments spans residues Leu27–Phe47 and Met52–Ile72.

Its subcellular location is the cell membrane. This is an uncharacterized protein from Bacillus subtilis (strain 168).